Reading from the N-terminus, the 230-residue chain is Lactate utilization protein C (230 aa).

The protein belongs to the LutC/YkgG family.

In terms of biological role, is involved in L-lactate degradation and allows cells to grow with lactate as the sole carbon source. The chain is Lactate utilization protein C from Halalkalibacterium halodurans (strain ATCC BAA-125 / DSM 18197 / FERM 7344 / JCM 9153 / C-125) (Bacillus halodurans).